The primary structure comprises 331 residues: Ketol-acid reductoisomerase (NADP(+)) (331 aa).

The KARI N-terminal Rossmann domain occupies 2–182 (AKMYYDQDAD…GGTKAGAIET (181 aa)). NADP(+) is bound by residues 25-28 (FGSQ), S51, S53, and 83-86 (DEKQ). The active site involves H108. An NADP(+)-binding site is contributed by G134. Residues 183-328 (TFKEETETDL…KSLREMMPWL (146 aa)) enclose the KARI C-terminal knotted domain. The Mg(2+) site is built by D191, E195, E227, and E231. S252 lines the substrate pocket.

This sequence belongs to the ketol-acid reductoisomerase family. Mg(2+) is required as a cofactor.

The enzyme catalyses (2R)-2,3-dihydroxy-3-methylbutanoate + NADP(+) = (2S)-2-acetolactate + NADPH + H(+). The catalysed reaction is (2R,3R)-2,3-dihydroxy-3-methylpentanoate + NADP(+) = (S)-2-ethyl-2-hydroxy-3-oxobutanoate + NADPH + H(+). Its pathway is amino-acid biosynthesis; L-isoleucine biosynthesis; L-isoleucine from 2-oxobutanoate: step 2/4. The protein operates within amino-acid biosynthesis; L-valine biosynthesis; L-valine from pyruvate: step 2/4. Involved in the biosynthesis of branched-chain amino acids (BCAA). Catalyzes an alkyl-migration followed by a ketol-acid reduction of (S)-2-acetolactate (S2AL) to yield (R)-2,3-dihydroxy-isovalerate. In the isomerase reaction, S2AL is rearranged via a Mg-dependent methyl migration to produce 3-hydroxy-3-methyl-2-ketobutyrate (HMKB). In the reductase reaction, this 2-ketoacid undergoes a metal-dependent reduction by NADPH to yield (R)-2,3-dihydroxy-isovalerate. In Caldanaerobacter subterraneus subsp. tengcongensis (strain DSM 15242 / JCM 11007 / NBRC 100824 / MB4) (Thermoanaerobacter tengcongensis), this protein is Ketol-acid reductoisomerase (NADP(+)).